A 95-amino-acid chain; its full sequence is Large ribosomal subunit protein eL37z (95 aa).

4 residues coordinate Zn(2+): Cys-19, Cys-22, Cys-34, and Cys-37. Residues 19 to 37 (CVRCGRRSFHIQKSRCSAC) form a C4-type zinc finger.

It belongs to the eukaryotic ribosomal protein eL37 family. Zn(2+) serves as cofactor.

In terms of biological role, binds to the 23S rRNA. The polypeptide is Large ribosomal subunit protein eL37z (RPL37A) (Arabidopsis thaliana (Mouse-ear cress)).